A 352-amino-acid polypeptide reads, in one-letter code: tRNA pseudouridine synthase D (352 aa).

Residue aspartate 81 is the Nucleophile of the active site. Residues 157–303 enclose the TRUD domain; the sequence is GVPNYFGTQR…MDHERRILRL (147 aa).

It belongs to the pseudouridine synthase TruD family.

The enzyme catalyses uridine(13) in tRNA = pseudouridine(13) in tRNA. Its function is as follows. Responsible for synthesis of pseudouridine from uracil-13 in transfer RNAs. The protein is tRNA pseudouridine synthase D of Pseudomonas putida (strain ATCC 700007 / DSM 6899 / JCM 31910 / BCRC 17059 / LMG 24140 / F1).